A 248-amino-acid polypeptide reads, in one-letter code: Delayed minus-nitrogen induction protein 2 (248 aa).

4 helical membrane-spanning segments follow: residues 26-46, 110-130, 144-164, and 186-206; these read IFSNAILGIAWLFLIFLCCSC, VHPVLLAIVVVFSTLSIVLTI, ISCLTTSTAACLLLALQMALA, and GVAAAVFGWISSGFFLLFSLI.

The protein belongs to the SUR7 family.

The protein resides in the membrane. This chain is Delayed minus-nitrogen induction protein 2 (dni2), found in Schizosaccharomyces pombe (strain 972 / ATCC 24843) (Fission yeast).